The chain runs to 148 residues: Lysozyme-like protein 2 (148 aa).

The first 19 residues, 1–19 (MKAAGILTLIGCLVTGAES), serve as a signal peptide directing secretion. The region spanning 20-148 (KIYTRCKLAK…SDWKKDCEVS (129 aa)) is the C-type lysozyme domain. 4 cysteine pairs are disulfide-bonded: cysteine 25–cysteine 145, cysteine 49–cysteine 133, cysteine 83–cysteine 98, and cysteine 94–cysteine 112. Glutamate 54 is an active-site residue. N-linked (GlcNAc...) asparagine glycosylation is present at asparagine 58. Aspartate 71 is a catalytic residue.

It belongs to the glycosyl hydrolase 22 family. In terms of assembly, monomer. Expressed in testis, epididymis and placenta.

The protein resides in the secreted. It carries out the reaction Hydrolysis of (1-&gt;4)-beta-linkages between N-acetylmuramic acid and N-acetyl-D-glucosamine residues in a peptidoglycan and between N-acetyl-D-glucosamine residues in chitodextrins.. In Homo sapiens (Human), this protein is Lysozyme-like protein 2 (LYZL2).